A 530-amino-acid polypeptide reads, in one-letter code: Formate--tetrahydrofolate ligase (530 aa).

46-53 (TPEGEGKT) serves as a coordination point for ATP.

Belongs to the formate--tetrahydrofolate ligase family.

The catalysed reaction is (6S)-5,6,7,8-tetrahydrofolate + formate + ATP = (6R)-10-formyltetrahydrofolate + ADP + phosphate. Its pathway is one-carbon metabolism; tetrahydrofolate interconversion. The polypeptide is Formate--tetrahydrofolate ligase (Malacoplasma penetrans (strain HF-2) (Mycoplasma penetrans)).